We begin with the raw amino-acid sequence, 69 residues long: Cold shock-like protein CspC (69 aa).

Residues G6–V66 enclose the CSD domain.

Its subcellular location is the cytoplasm. This is Cold shock-like protein CspC (cspC) from Shigella flexneri.